The following is a 4555-amino-acid chain: Protocadherin Fat 3 (4555 aa).

A signal peptide spans 1–31 (MSVTMGHCMGTKPPSCIILLLLKLFATVSQG). Topologically, residues 32 to 4153 (LPGTGPLGFH…AGHSYVGKEE (4122 aa)) are extracellular. Cadherin domains follow at residues 43–157 (THST…RPLF), 158–262 (SPTT…NEHA), 263–374 (PIIH…TPVR), 376–471 (EKDV…TPEF), 472–577 (QEAL…SPLF), 578–680 (EKVA…SKSF), 726–830 (KSFP…NPVF), 831–935 (LQDS…SPAF), 936–1042 (IPSS…TPYF), 1043–1147 (PDFA…APLT), 1148–1253 (SEPI…RPQF), 1254–1358 (PEKV…SPIP), 1362–1459 (DEPF…GPEF), 1460–1565 (SQPH…SPYF), 1566–1768 (TNPL…PPVF), 1769–1882 (LFSQ…PPVF), 1883–1985 (TQAV…TQSF), 1982–2083 (TQSF…SPVF), 2084–2185 (VGLP…MPVF), 2186–2286 (DKPF…PPVF), 2287–2393 (DQPT…PPVF), 2394–2495 (NQLI…SPAF), 2496–2599 (SQST…APQF), 2600–2707 (MTVE…LPSF), 2708–2813 (TQSQ…KPVF), 2814–2923 (ETST…APVF), 2924–3028 (AHEV…SPVC), 3029–3130 (DQVA…PPVF), 3131–3235 (SSNH…PPVF), 3236–3340 (ERRD…PPRF), 3341–3445 (SQDV…SPVF), 3446–3550 (TPAN…KPTA), and 3551–3660 (IPLE…PEDF). N-linked (GlcNAc...) asparagine glycosylation is present at Asn-48. A glycan (N-linked (GlcNAc...) asparagine) is linked at Asn-341. N-linked (GlcNAc...) asparagine glycosylation is found at Asn-481, Asn-562, Asn-667, Asn-799, Asn-879, Asn-898, and Asn-1006. 2 N-linked (GlcNAc...) asparagine glycosylation sites follow: Asn-1367 and Asn-1429. Asn-1751 carries an N-linked (GlcNAc...) asparagine glycan. Residues Asn-1944, Asn-1993, and Asn-1996 are each glycosylated (N-linked (GlcNAc...) asparagine). 4 N-linked (GlcNAc...) asparagine glycosylation sites follow: Asn-2208, Asn-2292, Asn-2331, and Asn-2467. A glycan (N-linked (GlcNAc...) asparagine) is linked at Asn-2734. Residue Asn-3000 is glycosylated (N-linked (GlcNAc...) asparagine). Asn-3201 carries N-linked (GlcNAc...) asparagine glycosylation. 3 N-linked (GlcNAc...) asparagine glycosylation sites follow: Asn-3449, Asn-3618, and Asn-3741. Residues 3794 to 3832 (SNDPCVEKPCPEDMQCVGYEASRRPFLCQCPPGKLGECS) enclose the EGF-like 1 domain. Intrachain disulfides connect Cys-3798-Cys-3809, Cys-3803-Cys-3821, and Cys-3823-Cys-3831. Positions 3834-4017 (HTSLSFAGNS…VGLTELKLGC (184 aa)) constitute a Laminin G-like domain. A glycan (N-linked (GlcNAc...) asparagine) is linked at Asn-3926. 10 disulfide bridges follow: Cys-3984/Cys-4017, Cys-4024/Cys-4035, Cys-4029/Cys-4045, Cys-4047/Cys-4056, Cys-4063/Cys-4074, Cys-4068/Cys-4083, Cys-4085/Cys-4094, Cys-4101/Cys-4112, Cys-4106/Cys-4121, and Cys-4123/Cys-4132. EGF-like domains are found at residues 4020–4057 (YPDACQRSPCLHGGSCSSLPSGGYQCSCLSQFTGTNCE) and 4059–4095 (EITACFPNPCRNGGSCDPIGNTFVCSCKAGLTGVTCE). Residues 4097 to 4133 (DVDECEREECENGGSCVNLFGSFFCNCTPGYVGQYCG) form the EGF-like 4; calcium-binding domain. Residues 4154–4174 (LIGIAVVLFVIFTLIVLFIVF) form a helical membrane-spanning segment. At 4175–4555 (RKKVFRKNYS…FVETQQQTQV (381 aa)) the chain is on the cytoplasmic side. Disordered stretches follow at residues 4300–4353 (IRKN…YHWD) and 4395–4474 (GGYD…LGGP). Residues 4322-4343 (CFTNSNKGSNSEVQSLSSFQSD) are compositionally biased toward polar residues. An omega-N-methylarginine mark is found at Arg-4508 and Arg-4518.

Restricted to the nervous system, mainly in brain. In brain, it is highly expressed in the olfactory bulb and retina. In the developing olfactory bulb, it localizes along the dendrites of these cells as well as in their axons to some extent. In retina, it cocentrates in the inner plexiform layer throughout development (at protein level).

Its subcellular location is the membrane. Functionally, may play a role in the interactions between neurites derived from specific subsets of neurons during development. This chain is Protocadherin Fat 3 (Fat3), found in Mus musculus (Mouse).